Here is a 257-residue protein sequence, read N- to C-terminus: Ribosomal RNA small subunit methyltransferase J (257 aa).

Residues 109 to 110, 125 to 126, and Asp179 contribute to the S-adenosyl-L-methionine site; these read RD and ER.

The protein belongs to the methyltransferase superfamily. RsmJ family.

It is found in the cytoplasm. The enzyme catalyses guanosine(1516) in 16S rRNA + S-adenosyl-L-methionine = N(2)-methylguanosine(1516) in 16S rRNA + S-adenosyl-L-homocysteine + H(+). Its function is as follows. Specifically methylates the guanosine in position 1516 of 16S rRNA. The protein is Ribosomal RNA small subunit methyltransferase J of Actinobacillus succinogenes (strain ATCC 55618 / DSM 22257 / CCUG 43843 / 130Z).